A 602-amino-acid chain; its full sequence is Prostaglandin G/H synthase 1 (602 aa).

Residues 1–26 (MSRRSLSLWFPLLLLLLLPPTPSVLL) form the signal peptide. Residues 34–72 (PVNPCCYYPCQNQGVCVRFGLDNYQCDCTRTGYSGPNCT) form the EGF-like domain. 4 disulfides stabilise this stretch: C38/C49, C39/C161, C43/C59, and C61/C71. 3 N-linked (GlcNAc...) asparagine glycosylation sites follow: N70, N106, and N146. The active-site Proton acceptor is the H209. Catalysis depends on Y387, which acts as the For cyclooxygenase activity. H390 is a binding site for heme b. C571 and C577 form a disulfide bridge.

Belongs to the prostaglandin G/H synthase family. In terms of assembly, homodimer. Heme b is required as a cofactor.

Its subcellular location is the microsome membrane. The protein resides in the endoplasmic reticulum membrane. The enzyme catalyses (5Z,8Z,11Z,14Z)-eicosatetraenoate + AH2 + 2 O2 = prostaglandin H2 + A + H2O. The catalysed reaction is (5Z,8Z,11Z,14Z)-eicosatetraenoate + 2 O2 = prostaglandin G2. It carries out the reaction prostaglandin G2 + AH2 = prostaglandin H2 + A + H2O. It catalyses the reaction (9Z,12Z)-octadecadienoate + AH2 + O2 = (9R)-hydroxy-(10E,12Z)-octadecadienoate + A + H2O. The enzyme catalyses (9Z,12Z)-octadecadienoate + AH2 + O2 = (9S)-hydroxy-(10E,12Z)-octadecadienoate + A + H2O. The catalysed reaction is (9Z,12Z)-octadecadienoate + AH2 + O2 = (13S)-hydroxy-(9Z,11E)-octadecadienoate + A + H2O. It carries out the reaction (9Z,12Z)-octadecadienoate + AH2 + O2 = (13R)-hydroxy-(9Z,11E)-octadecadienoate + A + H2O. The protein operates within lipid metabolism; prostaglandin biosynthesis. With respect to regulation, the cyclooxygenase activity is inhibited by nonsteroidal anti-inflammatory drugs (NSAIDs) including ibuprofen, flurbiprofen, ketoprofen, naproxen, flurbiprofen, anirolac, fenclofenac and diclofenac. Its function is as follows. Dual cyclooxygenase and peroxidase that plays an important role in the biosynthesis pathway of prostanoids, a class of C20 oxylipins mainly derived from arachidonate ((5Z,8Z,11Z,14Z)-eicosatetraenoate, AA, C20:4(n-6)), with a particular role in the inflammatory response. The cyclooxygenase activity oxygenates AA to the hydroperoxy endoperoxide prostaglandin G2 (PGG2), and the peroxidase activity reduces PGG2 to the hydroxy endoperoxide prostaglandin H2 (PGH2), the precursor of all 2-series prostaglandins and thromboxanes. This complex transformation is initiated by abstraction of hydrogen at carbon 13 (with S-stereochemistry), followed by insertion of molecular O2 to form the endoperoxide bridge between carbon 9 and 11 that defines prostaglandins. The insertion of a second molecule of O2 (bis-oxygenase activity) yields a hydroperoxy group in PGG2 that is then reduced to PGH2 by two electrons. Involved in the constitutive production of prostanoids in particular in the stomach and platelets. In gastric epithelial cells, it is a key step in the generation of prostaglandins, such as prostaglandin E2 (PGE2), which plays an important role in cytoprotection. In platelets, it is involved in the generation of thromboxane A2 (TXA2), which promotes platelet activation and aggregation, vasoconstriction and proliferation of vascular smooth muscle cells. Can also use linoleate (LA, (9Z,12Z)-octadecadienoate, C18:2(n-6)) as substrate and produce hydroxyoctadecadienoates (HODEs) in a regio- and stereospecific manner, being (9R)-HODE ((9R)-hydroxy-(10E,12Z)-octadecadienoate) and (13S)-HODE ((13S)-hydroxy-(9Z,11E)-octadecadienoate) its major products. The chain is Prostaglandin G/H synthase 1 from Mus musculus (Mouse).